Reading from the N-terminus, the 555-residue chain is Arginine--tRNA ligase (555 aa).

The 'HIGH' region motif lies at 117 to 127 (ANPNGPLHVGH).

The protein belongs to the class-I aminoacyl-tRNA synthetase family.

Its subcellular location is the cytoplasm. It catalyses the reaction tRNA(Arg) + L-arginine + ATP = L-arginyl-tRNA(Arg) + AMP + diphosphate. The sequence is that of Arginine--tRNA ligase from Methanospirillum hungatei JF-1 (strain ATCC 27890 / DSM 864 / NBRC 100397 / JF-1).